The primary structure comprises 114 residues: Superoxide dismutase [Cu-Zn] (114 aa).

Residues H37, H39, and H54 each coordinate Cu cation. Zn(2+) contacts are provided by H54, H62, H71, and D74. Positions 54 to 80 (HFNPGNKEHGAPTDGNRHLGDLGNIQA) are disordered. Residues 59–73 (NKEHGAPTDGNRHLG) show a composition bias toward basic and acidic residues. H111 lines the Cu cation pocket.

Belongs to the Cu-Zn superoxide dismutase family. Homodimer. Requires Cu cation as cofactor. Zn(2+) serves as cofactor.

It localises to the cytoplasm. It carries out the reaction 2 superoxide + 2 H(+) = H2O2 + O2. Its function is as follows. Destroys radicals which are normally produced within the cells and which are toxic to biological systems. This Drosophila tolteca (Fruit fly) protein is Superoxide dismutase [Cu-Zn].